The primary structure comprises 361 residues: DNA-(apurinic or apyrimidinic site) endonuclease (361 aa).

The disordered stretch occupies residues 1 to 90 (MTSRTKKLKM…TNKTTASVSI (90 aa)). Positions 25–39 (TSEEEKEEVEEEEEE) are enriched in acidic residues. The short motif at 41–44 (KKRK) is the Nuclear localization signal element. Over residues 43-64 (RKLVKKTPAKKAPAKKAAAKKK) the composition is skewed to basic residues. Residues 68–80 (EDEDEEEKEEEEE) are compositionally biased toward acidic residues. Glu-139 is a binding site for Mg(2+). The active site involves Tyr-211. Mg(2+)-binding residues include Asp-252, Asn-254, and Asp-350. The active-site Proton donor/acceptor is Asp-252.

This sequence belongs to the DNA repair enzymes AP/ExoA family. Mg(2+) serves as cofactor. Requires Mn(2+) as cofactor.

The protein resides in the nucleus. The polypeptide is DNA-(apurinic or apyrimidinic site) endonuclease (apeA) (Dictyostelium discoideum (Social amoeba)).